The primary structure comprises 556 residues: Urocanate hydratase (556 aa).

NAD(+)-binding positions include 52 to 53 (GG), Q130, 176 to 178 (GMG), E196, R201, 242 to 243 (NA), 263 to 267 (QTSAH), 273 to 274 (YL), and Y322. C410 is a catalytic residue. Residue G492 participates in NAD(+) binding.

It belongs to the urocanase family. It depends on NAD(+) as a cofactor.

The protein localises to the cytoplasm. It catalyses the reaction 4-imidazolone-5-propanoate = trans-urocanate + H2O. It functions in the pathway amino-acid degradation; L-histidine degradation into L-glutamate; N-formimidoyl-L-glutamate from L-histidine: step 2/3. Functionally, catalyzes the conversion of urocanate to 4-imidazolone-5-propionate. This Shewanella frigidimarina (strain NCIMB 400) protein is Urocanate hydratase.